A 449-amino-acid polypeptide reads, in one-letter code: Wilms tumor protein (449 aa).

The tract at residues 48–84 (YGSLGGPAPPPAPPPPPPPPPHSFIKQEPSWGGAEPH) is disordered. The span at 54–69 (PAPPPAPPPPPPPPPH) shows a compositional bias: pro residues. Residues Lys-73 and Lys-177 each participate in a glycyl lysine isopeptide (Lys-Gly) (interchain with G-Cter in SUMO) cross-link. The 9aaTAD motif lies at 236 to 244 (MTWNQMNLG). 3 C2H2-type zinc fingers span residues 323 to 347 (FMCA…SRKH), 353 to 377 (YQCD…QRRH), and 383 to 405 (FQCK…TRTH). Important for interaction with target DNA regions lie at residues 367 to 381 (SDQL…TGVK) and 393 to 401 (SRSDHLKTH). Residues 408-410 (KTS) carry the KTS motif motif. A C2H2-type 4 zinc finger spans residues 414–438 (FSCRWPSCQKKFARSDELVRHHNMH). Residue Lys-444 forms a Glycyl lysine isopeptide (Lys-Gly) (interchain with G-Cter in SUMO2) linkage.

The protein belongs to the EGR C2H2-type zinc-finger protein family. As to quaternary structure, homodimer. Interacts with WTIP. Interacts with actively translating polysomes. Detected in nuclear ribonucleoprotein (mRNP) particles. Interacts with HNRNPU via the zinc-finger region. Interacts with U2AF2. Interacts with CITED2. Interacts with ZNF224 via the zinc-finger region. Interacts with WTAP and SRY. Interacts with AMER1. Interacts with RBM4. As to expression, expressed in the kidney and a subset of hematopoietic cells.

It is found in the nucleus. The protein resides in the nucleolus. It localises to the cytoplasm. The protein localises to the nucleus speckle. Its subcellular location is the nucleoplasm. Transcription factor that plays an important role in cellular development and cell survival. Recognizes and binds to the DNA sequence 5'-GCG(T/G)GGGCG-3'. Regulates the expression of numerous target genes, including EPO. Plays an essential role for development of the urogenital system. It has a tumor suppressor as well as an oncogenic role in tumor formation. Function may be isoform-specific: isoforms lacking the KTS motif may act as transcription factors. Isoforms containing the KTS motif may bind mRNA and play a role in mRNA metabolism or splicing. Isoform 1 has lower affinity for DNA, and can bind RNA. This chain is Wilms tumor protein (WT1), found in Homo sapiens (Human).